Reading from the N-terminus, the 740-residue chain is DNA-directed RNA polymerase subunit beta' (740 aa).

Zn(2+) contacts are provided by C65, C67, C103, and C106. Mg(2+) contacts are provided by D539, D541, and D543.

The protein belongs to the RNA polymerase beta' chain family. RpoC1 subfamily. In terms of assembly, in plastids the minimal PEP RNA polymerase catalytic core is composed of four subunits: alpha, beta, beta', and beta''. When a (nuclear-encoded) sigma factor is associated with the core the holoenzyme is formed, which can initiate transcription. The cofactor is Mg(2+). Zn(2+) is required as a cofactor.

Its subcellular location is the plastid. The protein resides in the chloroplast. It carries out the reaction RNA(n) + a ribonucleoside 5'-triphosphate = RNA(n+1) + diphosphate. Its function is as follows. DNA-dependent RNA polymerase catalyzes the transcription of DNA into RNA using the four ribonucleoside triphosphates as substrates. The protein is DNA-directed RNA polymerase subunit beta' of Ostreococcus tauri.